Consider the following 372-residue polypeptide: Protein phosphatase Mn(2+)-dependent 1K (372 aa).

The transit peptide at M1–Q29 directs the protein to the mitochondrion. Residues K46–W61 are critical for association with the BCKDH complex. The 253-residue stretch at N94–F346 folds into the PPM-type phosphatase domain. D127 and G128 together coordinate Mn(2+). Position 248 is a phosphoserine (S248). Mn(2+) contacts are provided by D298 and D337.

The protein belongs to the PP2C family. In terms of assembly, monomer. Interacts with E1 and E2 components of the branched-chain alpha-ketoacid dehydrogenase (BCKDH) complex; this interaction requires colocalization in mitochondria. Interacts with BCKDHA but not with BCKDHB of the E1 component. Interacts with the 24-meric E2 core composed of DBT monomers with a 24:1 stoichiometry; the N-terminal region (residues 49-61) of PPM1K and C-terminal linker of the lipoyl domain of DBT (residues 145-160) are critical for this interaction, whereas the lipoyl prosthetic group is dispensable. Competes with BCKDK for binding to the E2 core; this interaction is modulated by branched-chain alpha-keto acids. At steady state, BCKDH holoenzyme preferentially binds BCKDK and BCKDHA is phosphorylated. In response to high levels of branched-chain alpha-keto acids, the inhibitory BCKDK is replaced by activating PPM1K leading to BCKDHA dephosphorylation and BCAA degradation. Requires Mn(2+) as cofactor.

Its subcellular location is the mitochondrion matrix. It carries out the reaction O-phospho-L-seryl-[3-methyl-2-oxobutanoate dehydrogenase] + H2O = L-seryl-[3-methyl-2-oxobutanoate dehydrogenase] + phosphate. The enzyme catalyses O-phospho-L-seryl-[protein] + H2O = L-seryl-[protein] + phosphate. It functions in the pathway protein modification. Serine/threonine-protein phosphatase component of macronutrients metabolism. Forms a functional kinase and phosphatase pair with BCKDK, serving as a metabolic regulatory node that coordinates branched-chain amino acids (BCAAs) with glucose and lipid metabolism via two distinct phosphoprotein targets: mitochondrial BCKDHA subunit of the branched-chain alpha-ketoacid dehydrogenase (BCKDH) complex and cytosolic ACLY, a lipogenic enzyme of Krebs cycle. At high levels of branched-chain ketoacids, dephosphorylates and activates mitochondrial BCKDH complex, a multisubunit complex consisting of three multimeric components each involved in different steps of BCAA catabolism: E1 composed of BCKDHA and BCKDHB, E2 core composed of DBT monomers, and E3 composed of DLD monomers. Tightly associates with the E2 component of BCKDH complex and dephosphorylates BCKDHA on Ser-347. Regulates the reversible phosphorylation of ACLY in response to changes in cellular carbohydrate abundance such as occurs during fasting to feeding metabolic transition. At fasting state, appears to dephosphorylate ACLY on Ser-455 and inactivate it. Refeeding stimulates MLXIPL/ChREBP transcription factor, leading to increased BCKDK to PPM1K expression ratio, phosphorylation and activation of ACLY that ultimately results in the generation of malonyl-CoA and oxaloacetate immediate substrates of de novo lipogenesis and gluconeogenesis, respectively. Recognizes phosphosites having SxS or RxxS motifs and strictly depends on Mn(2+) ions for the phosphatase activity. Regulates Ca(2+)-induced opening of mitochondrial transition pore and apoptotic cell death. In Bos taurus (Bovine), this protein is Protein phosphatase Mn(2+)-dependent 1K (PPM1K).